Consider the following 348-residue polypeptide: UDP-3-O-acylglucosamine N-acyltransferase (348 aa).

Histidine 241 (proton acceptor) is an active-site residue.

This sequence belongs to the transferase hexapeptide repeat family. LpxD subfamily. In terms of assembly, homotrimer.

It catalyses the reaction a UDP-3-O-[(3R)-3-hydroxyacyl]-alpha-D-glucosamine + a (3R)-hydroxyacyl-[ACP] = a UDP-2-N,3-O-bis[(3R)-3-hydroxyacyl]-alpha-D-glucosamine + holo-[ACP] + H(+). The protein operates within bacterial outer membrane biogenesis; LPS lipid A biosynthesis. Its function is as follows. Catalyzes the N-acylation of UDP-3-O-acylglucosamine using 3-hydroxyacyl-ACP as the acyl donor. Is involved in the biosynthesis of lipid A, a phosphorylated glycolipid that anchors the lipopolysaccharide to the outer membrane of the cell. This chain is UDP-3-O-acylglucosamine N-acyltransferase, found in Neisseria meningitidis serogroup C (strain 053442).